The chain runs to 382 residues: Lipid-A-disaccharide synthase (382 aa).

This sequence belongs to the LpxB family.

It catalyses the reaction 2-N,3-O-bis[(3R)-3-hydroxytetradecanoyl]-alpha-D-glucosaminyl 1-phosphate + UDP-2-N,3-O-bis[(3R)-3-hydroxytetradecanoyl]-alpha-D-glucosamine = lipid A disaccharide (E. coli) + UDP + H(+). It carries out the reaction a lipid X + a UDP-2-N,3-O-bis[(3R)-3-hydroxyacyl]-alpha-D-glucosamine = a lipid A disaccharide + UDP + H(+). It functions in the pathway glycolipid biosynthesis; lipid IV(A) biosynthesis; lipid IV(A) from (3R)-3-hydroxytetradecanoyl-[acyl-carrier-protein] and UDP-N-acetyl-alpha-D-glucosamine: step 5/6. In terms of biological role, condensation of UDP-2,3-diacylglucosamine and 2,3-diacylglucosamine-1-phosphate to form lipid A disaccharide, a precursor of lipid A, a phosphorylated glycolipid that anchors the lipopolysaccharide to the outer membrane of the cell. The sequence is that of Lipid-A-disaccharide synthase from Enterobacter sp. (strain 638).